The chain runs to 635 residues: Probable ethylene response sensor 2 (635 aa).

The next 3 helical transmembrane spans lie at 24–44 (ISDF…IYFV), 59–79 (FGAF…TFAI), and 94–114 (ATAV…PDLL). Positions 66 and 70 each coordinate Cu cation. The GAF domain maps to 159–308 (DRHTILRTTL…VVADQVAVAL (150 aa)). Positions 351–589 (VMNHEMRTPM…MFFVKLGMPE (239 aa)) constitute a Histidine kinase domain. Residue histidine 354 is modified to Phosphohistidine; by autocatalysis.

The protein belongs to the ethylene receptor family. In terms of assembly, homodimer. Requires Cu cation as cofactor.

The protein localises to the endoplasmic reticulum membrane. It catalyses the reaction ATP + protein L-histidine = ADP + protein N-phospho-L-histidine.. Ethylene receptor related to bacterial two-component regulators. Acts as a negative regulator of ethylene signaling. May play a role in the regulation of flowering by up-regulating GI (GIGANTEA) and RCN1 and regulate starch accumulation by down-regulating the alpha-amylase AMY3D. This is Probable ethylene response sensor 2 (ERS2) from Oryza sativa subsp. japonica (Rice).